We begin with the raw amino-acid sequence, 258 residues long: Imidazole glycerol phosphate synthase subunit HisF (258 aa).

Active-site residues include Asp11 and Asp130.

The protein belongs to the HisA/HisF family. Heterodimer of HisH and HisF.

Its subcellular location is the cytoplasm. It carries out the reaction 5-[(5-phospho-1-deoxy-D-ribulos-1-ylimino)methylamino]-1-(5-phospho-beta-D-ribosyl)imidazole-4-carboxamide + L-glutamine = D-erythro-1-(imidazol-4-yl)glycerol 3-phosphate + 5-amino-1-(5-phospho-beta-D-ribosyl)imidazole-4-carboxamide + L-glutamate + H(+). The protein operates within amino-acid biosynthesis; L-histidine biosynthesis; L-histidine from 5-phospho-alpha-D-ribose 1-diphosphate: step 5/9. In terms of biological role, IGPS catalyzes the conversion of PRFAR and glutamine to IGP, AICAR and glutamate. The HisF subunit catalyzes the cyclization activity that produces IGP and AICAR from PRFAR using the ammonia provided by the HisH subunit. This Sodalis glossinidius (strain morsitans) protein is Imidazole glycerol phosphate synthase subunit HisF.